A 663-amino-acid chain; its full sequence is UvrABC system protein B (663 aa).

A Helicase ATP-binding domain is found at 30–414 (EGIKAGKRHQ…IEHTDKMVEQ (385 aa)). 43 to 50 (GATGTGKT) is a binding site for ATP. The Beta-hairpin motif lies at 96-119 (YYDYYQPEAYVPSTDTFIEKDASI). The region spanning 434 to 600 (QIDDLLSEIQ…TINKKIHDLI (167 aa)) is the Helicase C-terminal domain. Positions 627 to 662 (QKTIDNIEKEMKQAAKDLDFEKATELRDMLFELKAE) constitute a UVR domain.

It belongs to the UvrB family. Forms a heterotetramer with UvrA during the search for lesions. Interacts with UvrC in an incision complex.

The protein resides in the cytoplasm. The UvrABC repair system catalyzes the recognition and processing of DNA lesions. A damage recognition complex composed of 2 UvrA and 2 UvrB subunits scans DNA for abnormalities. Upon binding of the UvrA(2)B(2) complex to a putative damaged site, the DNA wraps around one UvrB monomer. DNA wrap is dependent on ATP binding by UvrB and probably causes local melting of the DNA helix, facilitating insertion of UvrB beta-hairpin between the DNA strands. Then UvrB probes one DNA strand for the presence of a lesion. If a lesion is found the UvrA subunits dissociate and the UvrB-DNA preincision complex is formed. This complex is subsequently bound by UvrC and the second UvrB is released. If no lesion is found, the DNA wraps around the other UvrB subunit that will check the other stand for damage. This Staphylococcus aureus (strain MSSA476) protein is UvrABC system protein B.